The sequence spans 322 residues: tRNA uridine(34) hydroxylase (322 aa).

The Rhodanese domain maps to 125-219 (QQEDTIVVDA…YGKDPEVQGE (95 aa)). The Cysteine persulfide intermediate role is filled by Cys-179.

This sequence belongs to the TrhO family.

It catalyses the reaction uridine(34) in tRNA + AH2 + O2 = 5-hydroxyuridine(34) in tRNA + A + H2O. In terms of biological role, catalyzes oxygen-dependent 5-hydroxyuridine (ho5U) modification at position 34 in tRNAs. The chain is tRNA uridine(34) hydroxylase from Bacillus licheniformis (strain ATCC 14580 / DSM 13 / JCM 2505 / CCUG 7422 / NBRC 12200 / NCIMB 9375 / NCTC 10341 / NRRL NRS-1264 / Gibson 46).